The sequence spans 293 residues: 33 kDa chaperonin (293 aa).

2 cysteine pairs are disulfide-bonded: cysteine 237/cysteine 239 and cysteine 271/cysteine 274.

This sequence belongs to the HSP33 family. Under oxidizing conditions two disulfide bonds are formed involving the reactive cysteines. Under reducing conditions zinc is bound to the reactive cysteines and the protein is inactive.

It is found in the cytoplasm. In terms of biological role, redox regulated molecular chaperone. Protects both thermally unfolding and oxidatively damaged proteins from irreversible aggregation. Plays an important role in the bacterial defense system toward oxidative stress. In Haemophilus influenzae (strain PittEE), this protein is 33 kDa chaperonin.